A 198-amino-acid polypeptide reads, in one-letter code: Small ribosomal subunit protein uS4z (198 aa).

S68 is modified (phosphoserine). In terms of domain architecture, S4 RNA-binding spans 109–180; that stretch reads RRLQTIVFKS…PGRVKRRNEK (72 aa). A disordered region spans residues 163 to 198; it reads TSPFGGGRPGRVKRRNEKSASKKASGGGDADGDDEE.

The protein belongs to the universal ribosomal protein uS4 family. As to quaternary structure, binds to the translation initiation factors TIF3E1.

In Arabidopsis thaliana (Mouse-ear cress), this protein is Small ribosomal subunit protein uS4z (RPS9B).